The sequence spans 791 residues: DNA repair and recombination protein RAD54-like (791 aa).

Polar residues predominate over residues 1 to 20 (MRRSLAPSQRIGQSTASRNA). The disordered stretch occupies residues 1-53 (MRRSLAPSQRIGQSTASRNAFTPPLLQKKNKRACQKDLRLDTDADEDKERKRF). Positions 2–9 (RRSLAPSQ) are required for chromatin remodeling, strand pairing activities and coupling of ATPase activity. The residue at position 22 (Thr-22) is a Phosphothreonine. The segment covering 34–53 (CQKDLRLDTDADEDKERKRF) has biased composition (basic and acidic residues). Positions 175–349 (EGKKGDFNGC…FSLVNFVNPE (175 aa)) constitute a Helicase ATP-binding domain. 188 to 195 (DEMGLGKT) lines the ATP pocket. Residues 300-303 (DEGH) carry the DEGH box motif. The Helicase C-terminal domain maps to 506 to 663 (LLDFMLAAIR…NNESSEKHFT (158 aa)). The segment at 747-791 (KEVVESPESAAAEAESVEEESQPTQRKRPSPPLSDDSADEDFIGF) is disordered. Positions 782-791 (DSADEDFIGF) are enriched in acidic residues.

The protein belongs to the SNF2/RAD54 helicase family. Interacts (via N-terminus) with spn-A/Rad51.

It localises to the nucleus. In terms of biological role, involved in mitotic DNA repair and meiotic recombination. Functions in the recombinational DNA repair pathway. Essential for interhomolog gene conversion (GC), but may have a less important role in intersister GC than spn-A/Rad51. In the presence of DNA, spn-A/Rad51 enhances the ATPase activity of okr/Rad54. The chain is DNA repair and recombination protein RAD54-like from Drosophila ananassae (Fruit fly).